Consider the following 271-residue polypeptide: 3-methyl-2-oxobutanoate hydroxymethyltransferase (271 aa).

Mg(2+) is bound by residues Asp51 and Asp90. Residues 51–52 (DS), Asp90, and Lys118 each bind 3-methyl-2-oxobutanoate. Glu120 provides a ligand contact to Mg(2+). Catalysis depends on Glu186, which acts as the Proton acceptor.

This sequence belongs to the PanB family. In terms of assembly, homodecamer; pentamer of dimers. Mg(2+) is required as a cofactor.

Its subcellular location is the cytoplasm. The catalysed reaction is 3-methyl-2-oxobutanoate + (6R)-5,10-methylene-5,6,7,8-tetrahydrofolate + H2O = 2-dehydropantoate + (6S)-5,6,7,8-tetrahydrofolate. Its pathway is cofactor biosynthesis; (R)-pantothenate biosynthesis; (R)-pantoate from 3-methyl-2-oxobutanoate: step 1/2. Its function is as follows. Catalyzes the reversible reaction in which hydroxymethyl group from 5,10-methylenetetrahydrofolate is transferred onto alpha-ketoisovalerate to form ketopantoate. The protein is 3-methyl-2-oxobutanoate hydroxymethyltransferase of Stenotrophomonas maltophilia (strain R551-3).